The sequence spans 241 residues: Small ribosomal subunit protein uS2 (241 aa).

The protein belongs to the universal ribosomal protein uS2 family.

This chain is Small ribosomal subunit protein uS2, found in Pectobacterium carotovorum subsp. carotovorum (strain PC1).